Here is an 807-residue protein sequence, read N- to C-terminus: Protein WEAK CHLOROPLAST MOVEMENT UNDER BLUE LIGHT 1 (807 aa).

Residues 1–162 form a disordered region; the sequence is MEDLKTVEAS…GTPKNVDSHR (162 aa). The span at 31–40 shows a compositional bias: polar residues; sequence RESNIQSATK. Residues 46-73 show a composition bias toward low complexity; it reads QSQTDTEETQQSQTDTEETQQSQTDDTT. Over residues 138–157 the composition is skewed to polar residues; sequence RTVSSPRFSGSPVSTGTPKN. Residue Ser-148 is modified to Phosphoserine. Coiled-coil stretches lie at residues 191–429, 457–489, 516–621, and 664–724; these read RMQA…ELVA, DLHA…LKLA, IAVA…ALEE, and AAVS…WRAE. 2 disordered regions span residues 532-565 and 722-789; these read IASV…EAKS and RAEH…KKKK. 3 stretches are compositionally biased toward basic and acidic residues: residues 537 to 548, 722 to 732, and 739 to 749; these read SKEKDAREKMVE, RAEHEQKRKAG, and KNLKESFEGGK. Over residues 761 to 781 the composition is skewed to polar residues; the sequence is SSPSESYGTEENSETNLSPQT.

This sequence belongs to the WEB family. As to quaternary structure, interacts with PMI2. As to expression, ubiquitous but preferentially in chloroplast-containing tissues.

It localises to the cytoplasm. In terms of biological role, required for the chloroplast avoidance response under high intensity blue light. This avoidance response consists in the relocation of chloroplasts on the anticlinal side of exposed cells. Acts in association with PMI2 to maintain the velocity of chloroplast photorelocation movement via cp-actin filaments regulation. In Arabidopsis thaliana (Mouse-ear cress), this protein is Protein WEAK CHLOROPLAST MOVEMENT UNDER BLUE LIGHT 1 (WEB1).